The primary structure comprises 493 residues: Isoniazid-induced protein IniC (493 aa).

This chain is Isoniazid-induced protein IniC (iniC), found in Mycobacterium tuberculosis (strain CDC 1551 / Oshkosh).